We begin with the raw amino-acid sequence, 353 residues long: Sphingosine 1-phosphate receptor 2 (353 aa).

At 1 to 34 the chain is on the extracellular side; sequence MGSLYSEYLNPNKVQEHYNYTKETLETQETTSRQ. A glycan (N-linked (GlcNAc...) asparagine) is linked at Asn19. Residues 35 to 59 form a helical membrane-spanning segment; that stretch reads VASAFIVILCCAIVVENLLVLIAVA. Over 60 to 66 the chain is Cytoplasmic; sequence RNSKFHS. A helical membrane pass occupies residues 67–95; sequence AMYLFLGNLAASDLLAGVAFVANTLLSGS. The Extracellular portion of the chain corresponds to 96-109; the sequence is VTLRLTPVQWFARE. A helical transmembrane segment spans residues 110-128; the sequence is GSAFITLSASVFSLLAIAI. The Cytoplasmic portion of the chain corresponds to 129 to 147; it reads ERHVAIAKVKLYGSDKSCR. The helical transmembrane segment at 148-173 threads the bilayer; the sequence is MLLLIGASWLISLVLGGLPILGWNCL. The Extracellular segment spans residues 174-189; sequence GHLEACSTVLPLYAKH. The chain crosses the membrane as a helical span at residues 190–210; sequence YVLCVVTIFSIILLAIVALYV. The Cytoplasmic segment spans residues 211-233; sequence RIYCVVRSSHADMAAPQTLALLK. Residues 234 to 255 traverse the membrane as a helical segment; the sequence is TVTIVLGVFIVCWLPAFSILLL. The Extracellular segment spans residues 256 to 271; that stretch reads DYACPVHSCPILYKAH. Residues 272-292 traverse the membrane as a helical segment; sequence YFFAVSTLNSLLNPVIYTWRS. Residues 293-353 are Cytoplasmic-facing; sequence RDLRREVLRP…PTFLEGNTVV (61 aa). The S-palmitoyl cysteine moiety is linked to residue Cys305.

Belongs to the G-protein coupled receptor 1 family.

It localises to the cell membrane. Receptor for the lysosphingolipid sphingosine 1-phosphate (S1P). S1P is a bioactive lysophospholipid that elicits diverse physiological effects on most types of cells and tissues. When expressed in rat HTC4 hepatoma cells, is capable of mediating S1P-induced cell proliferation and suppression of apoptosis. Receptor for the chemokine-like protein FAM19A5. Mediates the inhibitory effect of FAM19A5 on vascular smooth muscle cell proliferation and migration. In lymphoid follicles, couples the binding of S1P to the activation of GNA13 and downstream inhibition of AKT activation leading to suppression of germinal center (GC) B cell growth and migration outside the GC niche. This chain is Sphingosine 1-phosphate receptor 2 (S1PR2), found in Homo sapiens (Human).